Consider the following 2698-residue polypeptide: Zinc finger protein 292 (2698 aa).

The segment at 567–589 (YSCPICAKNFNSKDSFVPHVTLH) adopts a C2H2-type 1 zinc-finger fold. The residue at position 654 (S654) is a Phosphoserine. 6 C2H2-type zinc fingers span residues 681–705 (FNCPVTFCKKGFKYFKNLIAHVKGH), 722–744 (VICQYCRRHFVSVTHLNDHLQMH), 750–774 (YICIQMKCKAGFNSYAELLAHRKEH), 779–803 (AKCLFPKCGRIFSQAYLLYDHEAQH), 807–831 (YTCKFTGCGKVYRSQSEMEKHQDGH), and 1085–1110 (FSCQVEGCTRTYNSSQSIGKHMKTAH). Positions 822 to 834 (SEMEKHQDGHSHP) are enriched in basic and acidic residues. A disordered region spans residues 822–894 (SEMEKHQDGH…AEPAVTKHGQ (73 aa)). K1104 bears the N6-acetyllysine mark. At S1146 the chain carries Phosphoserine. Polar residues predominate over residues 1278–1325 (NSTNHYPSQTDGNINSSFLKGGSSENGVFPSQVSSADDFSSTSAQPST). Positions 1278–1349 (NSTNHYPSQT…KERKPKHNKR (72 aa)) are disordered. The C2H2-type 8; degenerate zinc finger occupies 1361 to 1383 (FICSRCYRAFTNPRSLGGHLSKR). Polar residues-rich tracts occupy residues 1574-1603 (FSSSTEPPQNFTNNSAHVSVISGPQNTRSS) and 1624-1633 (SVSNTSQNVL). The tract at residues 1574 to 1656 (FSSSTEPPQN…PVPDTNTRSD (83 aa)) is disordered. 2 consecutive C2H2-type zinc fingers follow at residues 1879–1904 (FVCQNQGCNYSAMTKDALFKHYGKIH) and 1924–1949 (FKCVVPSCTKTFTRNSNLRAHCQLVH). The interval 1964 to 1997 (PYGRKSQSENLSSPQNNQVKKQPSMAEETKTESQ) is disordered. Polar residues predominate over residues 1971–1984 (SENLSSPQNNQVKK). N6-acetyllysine is present on K2020. Residues 2021–2032 (QLAEKKSPEKPE) are compositionally biased toward basic and acidic residues. The segment at 2021–2075 (QLAEKKSPEKPESSSQPVTSSAEQYNANLANLKTKGRKNKRHRKEKEEKREKNPV) is disordered. Over residues 2038 to 2051 (VTSSAEQYNANLAN) the composition is skewed to polar residues. The segment covering 2054-2064 (TKGRKNKRHRK) has biased composition (basic residues). C2H2-type zinc fingers lie at residues 2091–2116 (YCCVHQGCFAAFTIQQNLILHYQAVH), 2149–2174 (FRCQVSDCSRIFQAITGLIQHYMKLH), 2193–2218 (FPCDQLECKLSFTTYLSYVVHLEVDH), and 2233–2258 (YKCDCEGCDRIYATRSNLLRHIFNKH). Residues 2262-2271 (HKAHLIRPRK) are compositionally biased toward basic residues. Residues 2262–2323 (HKAHLIRPRK…KSNLENKSAK (62 aa)) form a disordered region. A C2H2-type 15 zinc finger spans residues 2362 to 2386 (YPCMIKGCTSVVTSESNIIRHYKCH). Disordered stretches follow at residues 2411-2454 (GKEI…GEKD), 2467-2553 (LINE…EEHP), and 2580-2608 (KQKKNSDRDHSNSGSKRGSHSSSRRHVDK). Basic and acidic residues predominate over residues 2421–2437 (KNDKKDPDSSVLEKNDN). A compositionally biased stretch (polar residues) spans 2470–2488 (EDSTNAENQGNTTLKGNNE). Composition is skewed to basic and acidic residues over residues 2489–2501 (FQEHDSCTSERQK) and 2580–2590 (KQKKNSDRDHS). A compositionally biased stretch (basic residues) spans 2596 to 2606 (RGSHSSSRRHV).

This sequence belongs to the krueppel C2H2-type zinc-finger protein family. In terms of tissue distribution, expressed in postnatal day 1 (P1) pituitary. Also detected in presomatotrophic cell line GHFT1-5.

It localises to the nucleus. Its function is as follows. May be involved in transcriptional regulation. This is Zinc finger protein 292 from Mus musculus (Mouse).